Consider the following 229-residue polypeptide: Enolase-phosphatase E1 (229 aa).

A disordered region spans residues 206–229 (DRDPASHHPQVQRFDDIHPEQIPA). Basic and acidic residues predominate over residues 218–229 (RFDDIHPEQIPA).

The protein belongs to the HAD-like hydrolase superfamily. MasA/MtnC family. As to quaternary structure, monomer. Mg(2+) is required as a cofactor.

The catalysed reaction is 5-methylsulfanyl-2,3-dioxopentyl phosphate + H2O = 1,2-dihydroxy-5-(methylsulfanyl)pent-1-en-3-one + phosphate. Its pathway is amino-acid biosynthesis; L-methionine biosynthesis via salvage pathway; L-methionine from S-methyl-5-thio-alpha-D-ribose 1-phosphate: step 3/6. It functions in the pathway amino-acid biosynthesis; L-methionine biosynthesis via salvage pathway; L-methionine from S-methyl-5-thio-alpha-D-ribose 1-phosphate: step 4/6. In terms of biological role, bifunctional enzyme that catalyzes the enolization of 2,3-diketo-5-methylthiopentyl-1-phosphate (DK-MTP-1-P) into the intermediate 2-hydroxy-3-keto-5-methylthiopentenyl-1-phosphate (HK-MTPenyl-1-P), which is then dephosphorylated to form the acireductone 1,2-dihydroxy-3-keto-5-methylthiopentene (DHK-MTPene). The protein is Enolase-phosphatase E1 of Klebsiella oxytoca.